Consider the following 465-residue polypeptide: Cysteine--tRNA ligase (465 aa).

A Zn(2+)-binding site is contributed by C27. The short motif at P29–H39 is the 'HIGH' region element. Zn(2+) contacts are provided by C207, H237, and E241. Residues K269–S273 carry the 'KMSKS' region motif. Residue K272 coordinates ATP.

This sequence belongs to the class-I aminoacyl-tRNA synthetase family. Monomer. Zn(2+) serves as cofactor.

It localises to the cytoplasm. It catalyses the reaction tRNA(Cys) + L-cysteine + ATP = L-cysteinyl-tRNA(Cys) + AMP + diphosphate. This Helicobacter pylori (strain G27) protein is Cysteine--tRNA ligase.